The following is a 948-amino-acid chain: Bifunctional glutamine synthetase adenylyltransferase/adenylyl-removing enzyme (948 aa).

Residues 1-445 (MAPPPDTSGS…IFTEVIAEPP (445 aa)) form an adenylyl removase region. Residues 451-948 (EPLLDGGEAE…WKQIIEAPVF (498 aa)) are adenylyl transferase.

This sequence belongs to the GlnE family. Requires Mg(2+) as cofactor.

It catalyses the reaction [glutamine synthetase]-O(4)-(5'-adenylyl)-L-tyrosine + phosphate = [glutamine synthetase]-L-tyrosine + ADP. The catalysed reaction is [glutamine synthetase]-L-tyrosine + ATP = [glutamine synthetase]-O(4)-(5'-adenylyl)-L-tyrosine + diphosphate. Its function is as follows. Involved in the regulation of glutamine synthetase GlnA, a key enzyme in the process to assimilate ammonia. When cellular nitrogen levels are high, the C-terminal adenylyl transferase (AT) inactivates GlnA by covalent transfer of an adenylyl group from ATP to specific tyrosine residue of GlnA, thus reducing its activity. Conversely, when nitrogen levels are low, the N-terminal adenylyl removase (AR) activates GlnA by removing the adenylyl group by phosphorolysis, increasing its activity. The regulatory region of GlnE binds the signal transduction protein PII (GlnB) which indicates the nitrogen status of the cell. In Methylococcus capsulatus (strain ATCC 33009 / NCIMB 11132 / Bath), this protein is Bifunctional glutamine synthetase adenylyltransferase/adenylyl-removing enzyme.